Here is a 108-residue protein sequence, read N- to C-terminus: Resistin (108 aa).

The N-terminal stretch at 1–18 (MKALCLLLLPVLGLLVSS) is a signal peptide. Cystine bridges form between C51–C104, C63–C103, C72–C89, C74–C91, and C78–C93.

The protein belongs to the resistin/FIZZ family. Homodimer; disulfide-linked. Interacts with DEFA1. In terms of tissue distribution, expressed in white adipose tissue (at protein level). Widely expressed, with particularly strong expression in lung, bone marrow, breast and peripheral blood. Expressed strongly in bone marrow and at lower levels in lung, but not detected in other tissues. Isoform 2 is detected in adipose tissue, bone marrow, brain, lung, peripheral blood, placenta and thymus.

It localises to the secreted. Hormone that seems to suppress insulin ability to stimulate glucose uptake into adipose cells. Potentially links obesity to diabetes. Promotes chemotaxis in myeloid cells. This Homo sapiens (Human) protein is Resistin (RETN).